We begin with the raw amino-acid sequence, 193 residues long: Thymidine kinase (193 aa).

ATP contacts are provided by residues 16–23 and 89–92; these read GPMFSGKS and DEIQ. The active-site Proton acceptor is the Glu-90. Zn(2+) contacts are provided by Cys-146, Cys-149, Cys-184, and Cys-187.

This sequence belongs to the thymidine kinase family. In terms of assembly, homotetramer.

Its subcellular location is the cytoplasm. It carries out the reaction thymidine + ATP = dTMP + ADP + H(+). The sequence is that of Thymidine kinase from Thermoanaerobacter pseudethanolicus (strain ATCC 33223 / 39E) (Clostridium thermohydrosulfuricum).